The following is a 183-amino-acid chain: Apo-citrate lyase phosphoribosyl-dephospho-CoA transferase (183 aa).

The protein belongs to the CitX family.

It catalyses the reaction apo-[citrate lyase ACP] + 2'-(5''-triphospho-alpha-D-ribosyl)-3'-dephospho-CoA = holo-[citrate lyase ACP] + diphosphate. In terms of biological role, transfers 2-(5''-triphosphoribosyl)-3'-dephosphocoenzyme-A on a serine residue to the apo-acyl carrier protein (gamma chain) of the citrate lyase to yield holo-acyl carrier protein. This chain is Apo-citrate lyase phosphoribosyl-dephospho-CoA transferase, found in Escherichia coli O7:K1 (strain IAI39 / ExPEC).